Reading from the N-terminus, the 335-residue chain is Vitamin B12 import system permease protein BtuC (335 aa).

A run of 9 helical transmembrane segments spans residues 22 to 42, 67 to 87, 94 to 114, 117 to 137, 153 to 173, 200 to 220, 243 to 263, 281 to 301, and 308 to 328; these read LLLL…AGDV, LAVM…QSLF, PGLL…VLLG, LLPV…MTFL, LLVG…AVYF, LVLA…ALNF, VLAI…IGFV, YLLP…DVVA, and AELP…IWLL.

This sequence belongs to the binding-protein-dependent transport system permease family. FecCD subfamily. In terms of assembly, the complex is composed of two ATP-binding proteins (BtuD), two transmembrane proteins (BtuC) and a solute-binding protein (BtuF).

Its subcellular location is the cell inner membrane. Functionally, part of the ABC transporter complex BtuCDF involved in vitamin B12 import. Involved in the translocation of the substrate across the membrane. The sequence is that of Vitamin B12 import system permease protein BtuC from Serratia proteamaculans (strain 568).